A 728-amino-acid chain; its full sequence is Catalase-peroxidase (728 aa).

The segment at 1–26 (MDNPTDTAGKCPVAHGNKPRGPSNRD) is disordered. Positions 96–218 (WHSAGTYRIT…LGAVQMGLIY (123 aa)) form a cross-link, tryptophyl-tyrosyl-methioninium (Trp-Tyr) (with M-244). Residue His-97 is the Proton acceptor of the active site. Residues 218–244 (YVNPEGPNGNPDPVAAARDIRETFARM) constitute a cross-link (tryptophyl-tyrosyl-methioninium (Tyr-Met) (with W-96)). Position 259 (His-259) interacts with heme b.

This sequence belongs to the peroxidase family. Peroxidase/catalase subfamily. Homodimer or homotetramer. Heme b is required as a cofactor. Post-translationally, formation of the three residue Trp-Tyr-Met cross-link is important for the catalase, but not the peroxidase activity of the enzyme.

The catalysed reaction is H2O2 + AH2 = A + 2 H2O. It catalyses the reaction 2 H2O2 = O2 + 2 H2O. In terms of biological role, bifunctional enzyme with both catalase and broad-spectrum peroxidase activity. Important for stationary phase survival. The sequence is that of Catalase-peroxidase from Rhizobium etli (strain ATCC 51251 / DSM 11541 / JCM 21823 / NBRC 15573 / CFN 42).